The chain runs to 359 residues: Phospho-N-acetylmuramoyl-pentapeptide-transferase (359 aa).

The next 10 membrane-spanning stretches (helical) occupy residues 27-47, 71-91, 93-113, 134-154, 170-190, 203-223, 234-254, 262-282, 286-306, and 336-356; these read IGAA…FIRT, VPTM…LLWA, LDNP…MIGA, LLLQ…HPGY, LGWF…NAVN, MVVS…VVLA, SGEL…FLWF, FMGD…AIII, FLLA…MLQV, and KVVV…IATL.

Belongs to the glycosyltransferase 4 family. MraY subfamily. It depends on Mg(2+) as a cofactor.

The protein localises to the cell inner membrane. It catalyses the reaction UDP-N-acetyl-alpha-D-muramoyl-L-alanyl-gamma-D-glutamyl-meso-2,6-diaminopimeloyl-D-alanyl-D-alanine + di-trans,octa-cis-undecaprenyl phosphate = di-trans,octa-cis-undecaprenyl diphospho-N-acetyl-alpha-D-muramoyl-L-alanyl-D-glutamyl-meso-2,6-diaminopimeloyl-D-alanyl-D-alanine + UMP. It participates in cell wall biogenesis; peptidoglycan biosynthesis. Functionally, catalyzes the initial step of the lipid cycle reactions in the biosynthesis of the cell wall peptidoglycan: transfers peptidoglycan precursor phospho-MurNAc-pentapeptide from UDP-MurNAc-pentapeptide onto the lipid carrier undecaprenyl phosphate, yielding undecaprenyl-pyrophosphoryl-MurNAc-pentapeptide, known as lipid I. This Desulfotalea psychrophila (strain LSv54 / DSM 12343) protein is Phospho-N-acetylmuramoyl-pentapeptide-transferase.